Reading from the N-terminus, the 399-residue chain is Nicotinate phosphoribosyltransferase (399 aa).

His217 is modified (phosphohistidine; by autocatalysis).

Belongs to the NAPRTase family. Post-translationally, transiently phosphorylated on a His residue during the reaction cycle. Phosphorylation strongly increases the affinity for substrates and increases the rate of nicotinate D-ribonucleotide production. Dephosphorylation regenerates the low-affinity form of the enzyme, leading to product release.

It catalyses the reaction nicotinate + 5-phospho-alpha-D-ribose 1-diphosphate + ATP + H2O = nicotinate beta-D-ribonucleotide + ADP + phosphate + diphosphate. It functions in the pathway cofactor biosynthesis; NAD(+) biosynthesis; nicotinate D-ribonucleotide from nicotinate: step 1/1. Functionally, catalyzes the synthesis of beta-nicotinate D-ribonucleotide from nicotinate and 5-phospho-D-ribose 1-phosphate at the expense of ATP. The chain is Nicotinate phosphoribosyltransferase from Burkholderia orbicola (strain MC0-3).